A 131-amino-acid chain; its full sequence is Ribosome-binding factor A (131 aa).

The protein belongs to the RbfA family. As to quaternary structure, monomer. Binds 30S ribosomal subunits, but not 50S ribosomal subunits or 70S ribosomes.

The protein resides in the cytoplasm. One of several proteins that assist in the late maturation steps of the functional core of the 30S ribosomal subunit. Associates with free 30S ribosomal subunits (but not with 30S subunits that are part of 70S ribosomes or polysomes). Required for efficient processing of 16S rRNA. May interact with the 5'-terminal helix region of 16S rRNA. The polypeptide is Ribosome-binding factor A (Ruegeria sp. (strain TM1040) (Silicibacter sp.)).